The sequence spans 397 residues: tRNA-specific 2-thiouridylase MnmA (397 aa).

ATP-binding positions include 19-26 and leucine 45; that span reads AMSGGVDS. The active-site Nucleophile is cysteine 113. A disulfide bridge links cysteine 113 with cysteine 210. Glycine 137 is a binding site for ATP. Residues 160–162 are interaction with tRNA; it reads RDQ. Cysteine 210 functions as the Cysteine persulfide intermediate in the catalytic mechanism.

Belongs to the MnmA/TRMU family.

The protein resides in the cytoplasm. It catalyses the reaction S-sulfanyl-L-cysteinyl-[protein] + uridine(34) in tRNA + AH2 + ATP = 2-thiouridine(34) in tRNA + L-cysteinyl-[protein] + A + AMP + diphosphate + H(+). Catalyzes the 2-thiolation of uridine at the wobble position (U34) of tRNA, leading to the formation of s(2)U34. This Bradyrhizobium sp. (strain BTAi1 / ATCC BAA-1182) protein is tRNA-specific 2-thiouridylase MnmA.